The chain runs to 964 residues: Probable LRR receptor-like serine/threonine-protein kinase IRK (964 aa).

Residues 1 to 20 (MYKALIFTVLLVSAVAPVRS) form the signal peptide. The Extracellular portion of the chain corresponds to 21–603 (LDPPLNDDVL…GHKRILLSIS (583 aa)). LRR repeat units follow at residues 92–116 (LQFL…MLLS), 117–141 (LVNL…FFRQ), 143–166 (GSLR…ISSC), 168–190 (SLAA…IWSL), 191–214 (NTLR…IDRL), 215–238 (NNLR…IGSC), 240–261 (LLKT…TFQQ), 263–286 (SLCY…IGEM), 287–310 (RSLE…IGNL), 312–334 (ALKV…TANC), and 335–358 (INLL…LFQD). N-linked (GlcNAc...) asparagine glycosylation is present at Asn104. Residue Asn173 is glycosylated (N-linked (GlcNAc...) asparagine). N-linked (GlcNAc...) asparagine glycosylation is present at Asn317. An N-linked (GlcNAc...) asparagine glycan is attached at Asn370. 7 LRR repeats span residues 375–399 (IKKI…LGDL), 400–423 (RDLE…IGEL), 425–447 (HLSV…TGGA), 448–471 (VSLE…IKNC), 472–495 (SSLR…LAKL), 496–519 (TRLE…LANL), and 521–544 (YLHT…IFNG). Asn470 carries an N-linked (GlcNAc...) asparagine glycan. N-linked (GlcNAc...) asparagine glycosylation is found at Asn526, Asn562, and Asn578. Residues 604–624 (SLIAISAAAAIVVGVIAITVL) form a helical membrane-spanning segment. At 625 to 964 (NLRVRASTVS…SGSSDELGSS (340 aa)) the chain is on the cytoplasmic side. One can recognise a Protein kinase domain in the interval 678–951 (LNKDCELGRG…GEAVNILRMI (274 aa)). ATP contacts are provided by residues 684-692 (LGRGGFGAV) and Lys706.

The protein belongs to the protein kinase superfamily. Ser/Thr protein kinase family. Interacts with IRKI. In terms of processing, autophosphorylated. As to expression, highly expressed in root tips, shoot apices and developing flowers.

The protein resides in the cell membrane. It carries out the reaction L-seryl-[protein] + ATP = O-phospho-L-seryl-[protein] + ADP + H(+). The catalysed reaction is L-threonyl-[protein] + ATP = O-phospho-L-threonyl-[protein] + ADP + H(+). This chain is Probable LRR receptor-like serine/threonine-protein kinase IRK, found in Arabidopsis thaliana (Mouse-ear cress).